The following is a 385-amino-acid chain: Succinate--CoA ligase [ADP-forming] subunit beta (385 aa).

In terms of domain architecture, ATP-grasp spans 9-244 (KEILRKYGVP…QDEEDPLETR (236 aa)). ATP-binding positions include Lys46, 53-55 (GRG), Glu99, Cys102, and Glu107. Residues Asn199 and Asp213 each contribute to the Mg(2+) site. Residues Asn264 and 321–323 (GIM) contribute to the substrate site.

It belongs to the succinate/malate CoA ligase beta subunit family. As to quaternary structure, heterotetramer of two alpha and two beta subunits. The cofactor is Mg(2+).

The enzyme catalyses succinate + ATP + CoA = succinyl-CoA + ADP + phosphate. It carries out the reaction GTP + succinate + CoA = succinyl-CoA + GDP + phosphate. It participates in carbohydrate metabolism; tricarboxylic acid cycle; succinate from succinyl-CoA (ligase route): step 1/1. In terms of biological role, succinyl-CoA synthetase functions in the citric acid cycle (TCA), coupling the hydrolysis of succinyl-CoA to the synthesis of either ATP or GTP and thus represents the only step of substrate-level phosphorylation in the TCA. The beta subunit provides nucleotide specificity of the enzyme and binds the substrate succinate, while the binding sites for coenzyme A and phosphate are found in the alpha subunit. The polypeptide is Succinate--CoA ligase [ADP-forming] subunit beta (Rickettsia bellii (strain RML369-C)).